We begin with the raw amino-acid sequence, 671 residues long: DNA ligase (671 aa).

NAD(+) is bound by residues 32-36, 81-82, and E113; these read DAEYD and SL. Residue K115 is the N6-AMP-lysine intermediate of the active site. NAD(+)-binding residues include R136, E173, K290, and K314. Residues C408, C411, C426, and C432 each contribute to the Zn(2+) site. In terms of domain architecture, BRCT spans 593-671; the sequence is EIDSPFAGKT…EAEMIRLLDA (79 aa).

It belongs to the NAD-dependent DNA ligase family. LigA subfamily. Requires Mg(2+) as cofactor. The cofactor is Mn(2+).

The enzyme catalyses NAD(+) + (deoxyribonucleotide)n-3'-hydroxyl + 5'-phospho-(deoxyribonucleotide)m = (deoxyribonucleotide)n+m + AMP + beta-nicotinamide D-nucleotide.. Its function is as follows. DNA ligase that catalyzes the formation of phosphodiester linkages between 5'-phosphoryl and 3'-hydroxyl groups in double-stranded DNA using NAD as a coenzyme and as the energy source for the reaction. It is essential for DNA replication and repair of damaged DNA. This is DNA ligase from Salmonella schwarzengrund (strain CVM19633).